A 252-amino-acid polypeptide reads, in one-letter code: 5'-nucleotidase SurE (252 aa).

Residues D8, D9, S39, and N91 each contribute to the a divalent metal cation site.

This sequence belongs to the SurE nucleotidase family. A divalent metal cation serves as cofactor.

It localises to the cytoplasm. It catalyses the reaction a ribonucleoside 5'-phosphate + H2O = a ribonucleoside + phosphate. Functionally, nucleotidase that shows phosphatase activity on nucleoside 5'-monophosphates. This chain is 5'-nucleotidase SurE, found in Legionella pneumophila (strain Corby).